The primary structure comprises 194 residues: Methyl-CpG-binding domain protein 3-like 1 (194 aa).

Residues Met1 to Ser104 form a transcription repressor region.

It belongs to the MBD3L family. Highly expressed in testis. Detected at low levels in pancreas. Not detected in the other tissues tested.

It localises to the nucleus. Functionally, transcriptional repressor. The protein is Methyl-CpG-binding domain protein 3-like 1 (MBD3L1) of Homo sapiens (Human).